The sequence spans 417 residues: MTSITHDQRPSKLVPPHGSAELKPLLLNGEARNQALKLASTLPAITLSSRERGDLIMFGIGGFTPLNGFMNQADWQGVVDNMRLQSGDNAGLFWPIPITLSAPKATADSLNQGDKVALVAQDGEIMGILTVEETYTIDKEHECQQVFTTTDPEHPGVQQVLEQGEVNIAGSVEVLSEGEFPTLYPEIYKTPAETRAILDNKGWQTVAAFQTRNPMHRSHEYLAKIAIEICDGVLIHSLLGALKPGDIPADVRQEAIKTLIDNYFRADTVIQAGYPLDMRYAGPREALLHAVFRQNYGCSHLIVGRDHAGVGDYYGAFDAQTIFDHVGKDDLITQPLKIGWTFWCNACNAMASDKTCPHEASEHVKVSGTKLRKALSEDLDVPENFSRPEVLQILRDYYAGIAFDERAEVKLVGASAV.

Belongs to the sulfate adenylyltransferase family.

It carries out the reaction sulfate + ATP + H(+) = adenosine 5'-phosphosulfate + diphosphate. The protein operates within sulfur metabolism; hydrogen sulfide biosynthesis; sulfite from sulfate: step 1/3. The protein is Sulfate adenylyltransferase of Psychrobacter cryohalolentis (strain ATCC BAA-1226 / DSM 17306 / VKM B-2378 / K5).